The following is a 103-amino-acid chain: Large ribosomal subunit protein bL21 (103 aa).

Belongs to the bacterial ribosomal protein bL21 family. As to quaternary structure, part of the 50S ribosomal subunit. Contacts protein L20.

Functionally, this protein binds to 23S rRNA in the presence of protein L20. This chain is Large ribosomal subunit protein bL21, found in Ruthia magnifica subsp. Calyptogena magnifica.